The chain runs to 464 residues: E3 ubiquitin-protein ligase MYLIP-B (464 aa).

Positions 1–279 (MLCHITRPDS…EIHAFYRCDT (279 aa)) constitute an FERM domain. The RING-type zinc finger occupies 381–416 (CALCCEQEISAAFCPCGHMFCCYNCASQLQCCPVCR).

Interacts with anxa5.

It localises to the cytoplasm. It is found in the cytosol. It catalyses the reaction S-ubiquitinyl-[E2 ubiquitin-conjugating enzyme]-L-cysteine + [acceptor protein]-L-lysine = [E2 ubiquitin-conjugating enzyme]-L-cysteine + N(6)-ubiquitinyl-[acceptor protein]-L-lysine.. Its pathway is protein modification; protein ubiquitination. Functionally, E3 ubiquitin-protein ligase that mediates ubiquitination and subsequent proteasomal degradation of myosin regulatory light chain (MRLC). Regulates cell movements during gastrulation by acting downstream of fz7 to antagonize the frizzled-signaling pathway. The chain is E3 ubiquitin-protein ligase MYLIP-B from Danio rerio (Zebrafish).